Here is a 558-residue protein sequence, read N- to C-terminus: Glypican-1 (558 aa).

An N-terminal signal peptide occupies residues 1–23 (MELRARGWWLLCAAAALVACARG). 7 cysteine pairs are disulfide-bonded: Cys-32-Cys-68, Cys-62-Cys-256, Cys-69-Cys-259, Cys-191-Cys-343, Cys-246-Cys-279, Cys-268-Cys-415, and Cys-272-Cys-401. Residues Asn-79 and Asn-116 are each glycosylated (N-linked (GlcNAc...) asparagine). The segment at 341-374 (QGCGNPKVNPQGPGPEEKRRRGKLAPRERPPSGT) is disordered. Positions 355-370 (PEEKRRRGKLAPRERP) are enriched in basic and acidic residues. 3 O-linked (Xyl...) (heparan sulfate) serine glycosylation sites follow: Ser-486, Ser-488, and Ser-490. The interval 505–534 (RKSSSSRTPLTHALPGLSEQEGQKTSAASC) is disordered. Ser-530 carries the GPI-anchor amidated serine lipid modification. A propeptide spans 531 to 558 (AASCPQPPTFLLPLLLFLALTVARPRWR) (removed in mature form).

The protein belongs to the glypican family. In terms of processing, S-nitrosylated in a Cu(2+)-dependent manner. Nitric acid (NO) is released from the nitrosylated cysteines by ascorbate or by some other reducing agent, in a Cu(2+) or Zn(2+) dependent manner. This free nitric oxide is then capable of cleaving the heparan sulfate side chains. Post-translationally, N- and O-glycosylated. N-glycosylation is mainly of the complex type containing sialic acid. O-glycosylated with heparan sulfate. The heparan sulfate chains can be cleaved either by the action of heparanase or, degraded by a deaminative process that uses nitric oxide (NO) released from the S-nitrosylated cysteines. This process is triggered by ascorbate, or by some other reducing agent, in a Cu(2+)- or Zn(2+) dependent manner. Cu(2+) ions are provided by ceruloproteins such as APP, PRNP or CP which associate with GCP1 in intracellular compartments or lipid rafts. This cell-associated glypican is further processed to give rise to a medium-released species.

The protein localises to the cell membrane. It is found in the endosome. The protein resides in the secreted. It localises to the extracellular space. Cell surface proteoglycan that bears heparan sulfate. Binds, via the heparan sulfate side chains, alpha-4 (V) collagen and participates in Schwann cell myelination. May act as a catalyst in increasing the rate of conversion of prion protein PRPN(C) to PRNP(Sc) via associating (via the heparan sulfate side chains) with both forms of PRPN, targeting them to lipid rafts and facilitating their interaction. Required for proper skeletal muscle differentiation by sequestering FGF2 in lipid rafts preventing its binding to receptors (FGFRs) and inhibiting the FGF-mediated signaling. This Homo sapiens (Human) protein is Glypican-1 (GPC1).